The primary structure comprises 229 residues: uncharacterized protein (229 aa).

Helical transmembrane passes span 21–41, 56–76, 83–103, 109–129, 141–161, 162–182, and 202–222; these read IYSL…LMLY, MIYY…SGAA, ALPI…FIIV, TVFQ…IIGV, AMFA…FIGS, GMMS…LIAS, and WAVA…ISLL.

Belongs to the BI1 family.

The protein resides in the cell membrane. This is an uncharacterized protein from Streptococcus pyogenes serotype M6 (strain ATCC BAA-946 / MGAS10394).